Consider the following 900-residue polypeptide: MYCDKGASSLANGLLPNVSGDITAKDNILDALDSSAEEHFWGRYIDGFEGQIFPQIPVSVHEAHLTGRARYEIILGNSMVTTLYTVSSIIRTGWALLVSQYTESQDVVIVSSLELPSQAMGGTILFPIRFRIRQDGRTEELLQSAKKHADKVLSSQKHDFPHTKDFVDPFSNSILLICTESQPSHSLEELLTELSASKKCALVLRCELLEDKISISAMFDPQVVRPRQTRRILDQLGHILKQISGSDMLVGDLDFLSPEDRQEIGRWNSRSALSDECIHALISKQAQQNPAAMAVNAHDGNFTYGELESYATRLAAHLIHIGVKPGNFVPTLFEKSKWTQVGILAILKAGAAFVMLDPSHPPARNQLICRKANACFALASAPCEPVLSMAVPHVITLSHSFMEELGRLQPPHEQKSPCLDPRAVAYLLFTSGSTGQPKGAILEHRSFAAASRGVVAMTHMSSTTRTLQHSSYSFGAAIVEIIATLVAGGCVVVLSDTERLSNVAASMVAYSVNWAFMTPSFARTVNPADVPCLRVLATGGEGVTSDIVETWASFVSLYTVYGSAEQSSIAAMAGPLATHQRGNSANVGSPFAGCYAWIVQPDRPEKLAPVGCVGELVLEGALVARGYIDEVESTAAAFPKGFSWRCLFPLHQEGSTRFYRTGDLVRYAVDGTLEFVARRNGYIKLRGQRIELGEIESQLKAVARQPYEFCVEVVVPKGETADKAVLVAFVALGSAYTDNEICESAISSPEQFDQGILVDVLGHVEERLAETLPAFMIPRFFFPLQHFPVTSSGKIARKILREQAAQMSVLQLAELSLGSVEKKELQSDMERYLRSVWVQLLGVPEDFIGANDSFFRVGGDSLKAIKLFQRLRRDGYNLNVTSIVAAPTLSQMARNCSLLD.

The interval 284–686 (KQAQQNPAAM…ARRNGYIKLR (403 aa)) is adenylation. The Carrier domain occupies 824 to 900 (ELQSDMERYL…QMARNCSLLD (77 aa)). The residue at position 861 (Ser-861) is an O-(pantetheine 4'-phosphoryl)serine.

Belongs to the NRP synthetase family.

It participates in mycotoxin biosynthesis. Its function is as follows. Nonribosomal peptide synthetase; part of the gene clusters that mediate the biosynthesis of AM-toxins, host-selective toxins (HSTs) causing Alternaria blotch on apple, a worldwide distributed disease. AM-toxins are cyclic depsipeptides containing the 3 residues 2-hydroxy-isovaleric acid (2-HIV), dehydroalanine, L-alanine which are common for all 3 AM-toxins I to III. The fourth precursor is L-alpha-amino-methoxyphenyl-valeric acid (L-Amv) for AM-toxin I, L-alpha-amino-phenyl-valeric acid (L-Apv) for AM-toxin II, and L-alpha-amino-hydroxyphenyl-valeric acid (L-Ahv) for AM-toxin III. AM-toxins have two target sites for affecting susceptible apple cells; they cause invagination of the plasma membrane and electrolyte loss and chloroplast disorganization. The non-ribosomal peptide synthetase AMT1 contains 4 catalytic modules and is responsible for activation of each residue in AM-toxin. The aldo-keto reductase AMT2 catalyzes the conversion of 2-keto-isovaleric acid (2-KIV) to 2-hydroxy-isovaleric acid (2-HIV), one of the precursor residues incorporated by AMT1 during AM-toxin biosynthesis, by reduction of its ketone to an alcohol. The cytochrome P450 monooxygenase AMT3 and the thioesterase AMT4 are also important for AM-toxin production, but their exact function within the AM-toxin biosynthesis are not known yet. Up to 21 proteins (including AMT1 to AMT4) are predicted to be involved in AM-toxin biosynthesis since their expression ishighly up-regulated in AM-toxin-producing cultures. The chain is Nonribosomal peptide synthetase AMT10 from Alternaria alternata (Alternaria rot fungus).